Here is a 154-residue protein sequence, read N- to C-terminus: UPF0225 protein YE2246 (154 aa).

Belongs to the UPF0225 family.

The protein is UPF0225 protein YE2246 of Yersinia enterocolitica serotype O:8 / biotype 1B (strain NCTC 13174 / 8081).